A 388-amino-acid chain; its full sequence is Protein TsgA homolog (388 aa).

The next 12 helical transmembrane spans lie at 12 to 32, 51 to 71, 77 to 97, 102 to 122, 137 to 157, 163 to 183, 203 to 223, 246 to 266, 272 to 292, 294 to 314, 331 to 351, and 356 to 376; these read CISF…GIFL, TFLN…TNII, LIFG…SHNL, ISMF…TYII, LTDS…ALII, WYWV…ITIN, FSIL…LSFI, SAFW…LKFF, IITL…FYDY, LLYI…TIII, YILT…GPIV, and IFSA…LVII.

Belongs to the major facilitator superfamily. TsgA family.

The protein localises to the cell membrane. The polypeptide is Protein TsgA homolog (Buchnera aphidicola subsp. Baizongia pistaciae (strain Bp)).